Here is a 459-residue protein sequence, read N- to C-terminus: Cysteine--tRNA ligase (459 aa).

A Zn(2+)-binding site is contributed by Cys28. Positions 30–40 (VTIYDLCHIGH) match the 'HIGH' region motif. Zn(2+) is bound by residues Cys209, His234, and Glu238. Positions 266-270 (KMSKS) match the 'KMSKS' region motif. Lys269 lines the ATP pocket.

The protein belongs to the class-I aminoacyl-tRNA synthetase family. In terms of assembly, monomer. Zn(2+) is required as a cofactor.

The protein localises to the cytoplasm. The catalysed reaction is tRNA(Cys) + L-cysteine + ATP = L-cysteinyl-tRNA(Cys) + AMP + diphosphate. The protein is Cysteine--tRNA ligase of Shewanella pealeana (strain ATCC 700345 / ANG-SQ1).